We begin with the raw amino-acid sequence, 98 residues long: Beta-2-microglobulin (98 aa).

The 89-residue stretch at 4–92 (PKVQVYSRFP…HETLKEPQVY (89 aa)) folds into the Ig-like C1-type domain. A disulfide bridge links Cys24 with Cys79.

The protein belongs to the beta-2-microglobulin family. As to quaternary structure, heterodimer of an alpha chain and a beta chain. Beta-2-microglobulin is the beta-chain of major histocompatibility complex class I molecules.

The protein resides in the secreted. In terms of biological role, component of the class I major histocompatibility complex (MHC). Involved in the presentation of peptide antigens to the immune system. This is Beta-2-microglobulin (B2M) from Meleagris gallopavo (Wild turkey).